A 292-amino-acid polypeptide reads, in one-letter code: ATP synthase gamma chain (292 aa).

It belongs to the ATPase gamma chain family. F-type ATPases have 2 components, CF(1) - the catalytic core - and CF(0) - the membrane proton channel. CF(1) has five subunits: alpha(3), beta(3), gamma(1), delta(1), epsilon(1). CF(0) has three main subunits: a, b and c.

The protein resides in the cell inner membrane. Produces ATP from ADP in the presence of a proton gradient across the membrane. The gamma chain is believed to be important in regulating ATPase activity and the flow of protons through the CF(0) complex. The chain is ATP synthase gamma chain from Nitrobacter winogradskyi (strain ATCC 25391 / DSM 10237 / CIP 104748 / NCIMB 11846 / Nb-255).